Consider the following 184-residue polypeptide: ATP synthase subunit b (184 aa).

The helical transmembrane segment at 24–44 (ILVVVVGFALLMFIVIKFIVP) threads the bilayer.

It belongs to the ATPase B chain family. As to quaternary structure, F-type ATPases have 2 components, F(1) - the catalytic core - and F(0) - the membrane proton channel. F(1) has five subunits: alpha(3), beta(3), gamma(1), delta(1), epsilon(1). F(0) has three main subunits: a(1), b(2) and c(10-14). The alpha and beta chains form an alternating ring which encloses part of the gamma chain. F(1) is attached to F(0) by a central stalk formed by the gamma and epsilon chains, while a peripheral stalk is formed by the delta and b chains.

The protein localises to the cell membrane. F(1)F(0) ATP synthase produces ATP from ADP in the presence of a proton or sodium gradient. F-type ATPases consist of two structural domains, F(1) containing the extramembraneous catalytic core and F(0) containing the membrane proton channel, linked together by a central stalk and a peripheral stalk. During catalysis, ATP synthesis in the catalytic domain of F(1) is coupled via a rotary mechanism of the central stalk subunits to proton translocation. In terms of biological role, component of the F(0) channel, it forms part of the peripheral stalk, linking F(1) to F(0). The sequence is that of ATP synthase subunit b (atpF) from Micrococcus luteus (strain ATCC 4698 / DSM 20030 / JCM 1464 / CCM 169 / CCUG 5858 / IAM 1056 / NBRC 3333 / NCIMB 9278 / NCTC 2665 / VKM Ac-2230) (Micrococcus lysodeikticus).